A 284-amino-acid chain; its full sequence is Phosphatidylglycerol--prolipoprotein diacylglyceryl transferase (284 aa).

7 helical membrane passes run 21-41, 62-82, 106-126, 136-156, 190-210, 218-238, and 252-272; these read IEVH…FYMA, YFLW…ILIY, FVGI…IASY, LLIY…FGRI, PSQL…VMWA, GLLI…AEFY, and LSMG…ILLY. Arginine 155 provides a ligand contact to a 1,2-diacyl-sn-glycero-3-phospho-(1'-sn-glycerol).

It belongs to the Lgt family.

Its subcellular location is the cell inner membrane. It catalyses the reaction L-cysteinyl-[prolipoprotein] + a 1,2-diacyl-sn-glycero-3-phospho-(1'-sn-glycerol) = an S-1,2-diacyl-sn-glyceryl-L-cysteinyl-[prolipoprotein] + sn-glycerol 1-phosphate + H(+). It functions in the pathway protein modification; lipoprotein biosynthesis (diacylglyceryl transfer). Catalyzes the transfer of the diacylglyceryl group from phosphatidylglycerol to the sulfhydryl group of the N-terminal cysteine of a prolipoprotein, the first step in the formation of mature lipoproteins. This is Phosphatidylglycerol--prolipoprotein diacylglyceryl transferase from Helicobacter pylori (strain P12).